A 637-amino-acid polypeptide reads, in one-letter code: Dihydrolipoyllysine-residue acetyltransferase component of pyruvate dehydrogenase complex, mitochondrial (637 aa).

The transit peptide at 1 to 85 (MWRVCVRRAQ…LLGSPGRRSY (85 aa)) directs the protein to the mitochondrion. Residues 80–100 (PGRRSYSLPPHQKVPLPSLSP) form a disordered region. Residues 90 to 166 (HQKVPLPSLS…PIGSIICITV (77 aa)) form the Lipoyl-binding 1 domain. Ser99 carries the post-translational modification Phosphoserine. An N6-lipoyllysine modification is found at Lys131. Disordered regions lie at residues 189-219 (QAAAPTPAPAPCAAPTAPSAKAPGSSYPPHM) and 307-340 (LKPQAPPPVPPPVAAAPPTAQPLAPTPSGLPAGP). Positions 201–211 (AAPTAPSAKAP) are enriched in low complexity. The Lipoyl-binding 2 domain occupies 218–287 (HMQVSAVGEQ…PLGAPLCIIV (70 aa)). Residues 310 to 321 (QAPPPVPPPVAA) show a composition bias toward pro residues. Residues 322–333 (APPTAQPLAPTP) are compositionally biased toward low complexity. The 38-residue stretch at 345 to 382 (FVSPLAKKLAAERGIDLTQVKGTGPEGRIIKKDIDSFV) folds into the Peripheral subunit-binding (PSBD) domain. Arg451 is a binding site for CoA. An N6-acetyllysine modification is found at Lys456. An N6-succinyllysine modification is found at Lys463. Ser465 serves as a coordination point for CoA. Lys537 is modified (N6-succinyllysine). Residues Ser556, Asn557, and Gly581 each coordinate CoA. Residues His610 and Asp614 contribute to the active site.

It belongs to the 2-oxoacid dehydrogenase family. Part of the pyruvate dehydrogenase complex (PDHc) that is a multi-enzyme complex composed of multiple copies of three enzymes, pyruvate dehydrogenase (subunits PDH1A and PDHB, E1 component), dihydrolipoamide acetyltransferase (DLAT, E2 component), and dihydrolipoamide dehydrogenase (DLD, E3 component) to which is added an additional protein the E3-binding protein (PDHX, E3BP). In terms of structural architecture, the E2 and E3BP components assemble into a 60meric central core with icosahedral symmetry. The central core is decorated with E1 and E3 proteins. Currently, two alternative models for the E2:E3BP stoichiometry are considered as being either 48:12 (E2(48)-E3BP(12)) or 40:20 (E2(40)-E3BP(20)). Interacts with PDK2 and PDK3. Interacts with SIRT4. Interacts with PDHB. Requires (R)-lipoate as cofactor. Delipoylated at Lys-131 by SIRT4, delipoylation decreases the PHD complex activity. In terms of tissue distribution, detected at higher levels in cauda epididymal spermatazoa than in caput epididymal spermatazoa (at protein level).

It is found in the mitochondrion matrix. It carries out the reaction N(6)-[(R)-dihydrolipoyl]-L-lysyl-[protein] + acetyl-CoA = N(6)-[(R)-S(8)-acetyldihydrolipoyl]-L-lysyl-[protein] + CoA. Its function is as follows. As part of the pyruvate dehydrogenase complex, catalyzes the transfers of an acetyl group to a lipoic acid moiety. The pyruvate dehydrogenase complex, catalyzes the overall conversion of pyruvate to acetyl-CoA and CO(2), and thereby links cytoplasmic glycolysis and the mitochondrial tricarboxylic acid (TCA) cycle. This is Dihydrolipoyllysine-residue acetyltransferase component of pyruvate dehydrogenase complex, mitochondrial from Mesocricetus auratus (Golden hamster).